Consider the following 144-residue polypeptide: Large ribosomal subunit protein uL13 (144 aa).

This sequence belongs to the universal ribosomal protein uL13 family. As to quaternary structure, part of the 50S ribosomal subunit.

In terms of biological role, this protein is one of the early assembly proteins of the 50S ribosomal subunit, although it is not seen to bind rRNA by itself. It is important during the early stages of 50S assembly. The sequence is that of Large ribosomal subunit protein uL13 from Legionella pneumophila (strain Paris).